Here is a 318-residue protein sequence, read N- to C-terminus: Formimidoylglutamase (318 aa).

Positions 130, 155, 157, 159, 246, and 248 each coordinate Mn(2+).

This sequence belongs to the arginase family. Requires Mn(2+) as cofactor.

It catalyses the reaction N-formimidoyl-L-glutamate + H2O = formamide + L-glutamate. It functions in the pathway amino-acid degradation; L-histidine degradation into L-glutamate; L-glutamate from N-formimidoyl-L-glutamate (hydrolase route): step 1/1. Functionally, catalyzes the conversion of N-formimidoyl-L-glutamate to L-glutamate and formamide. The sequence is that of Formimidoylglutamase from Photorhabdus laumondii subsp. laumondii (strain DSM 15139 / CIP 105565 / TT01) (Photorhabdus luminescens subsp. laumondii).